The chain runs to 189 residues: Interferon alpha-C (189 aa).

The signal sequence occupies residues 1-23 (MAPAWSFRLALLLLSCNAICSLG). 2 cysteine pairs are disulfide-bonded: C24/C122 and C52/C162.

The protein belongs to the alpha/beta interferon family.

The protein localises to the secreted. Its function is as follows. Produced by macrophages, IFN-alpha have antiviral activities. Interferon stimulates the production of two enzymes: a protein kinase and an oligoadenylate synthetase. The polypeptide is Interferon alpha-C (IFNAC) (Bos taurus (Bovine)).